We begin with the raw amino-acid sequence, 92 residues long: MSDRIRAHVYVSGRVQGVYYRANTRDTARERDIDGWVRNLDDGRVEAVFEGPREAVESMVGWCHTGSPKARVESVDAAYDDPEGVDGFEIRR.

The region spanning 6–92 (RAHVYVSGRV…EGVDGFEIRR (87 aa)) is the Acylphosphatase-like domain. Residues Arg-21 and Asn-39 contribute to the active site.

The protein belongs to the acylphosphatase family.

The catalysed reaction is an acyl phosphate + H2O = a carboxylate + phosphate + H(+). This is Acylphosphatase (acyP) from Natronomonas pharaonis (strain ATCC 35678 / DSM 2160 / CIP 103997 / JCM 8858 / NBRC 14720 / NCIMB 2260 / Gabara) (Halobacterium pharaonis).